Reading from the N-terminus, the 607-residue chain is Elongation factor 4 (607 aa).

Positions 11–193 (SKIRNFSIIA…QIVEKVPAPT (183 aa)) constitute a tr-type G domain. GTP is bound by residues 23-28 (DHGKST) and 140-143 (NKID).

Belongs to the TRAFAC class translation factor GTPase superfamily. Classic translation factor GTPase family. LepA subfamily.

It localises to the cell membrane. The catalysed reaction is GTP + H2O = GDP + phosphate + H(+). Required for accurate and efficient protein synthesis under certain stress conditions. May act as a fidelity factor of the translation reaction, by catalyzing a one-codon backward translocation of tRNAs on improperly translocated ribosomes. Back-translocation proceeds from a post-translocation (POST) complex to a pre-translocation (PRE) complex, thus giving elongation factor G a second chance to translocate the tRNAs correctly. Binds to ribosomes in a GTP-dependent manner. This is Elongation factor 4 from Bacillus mycoides (strain KBAB4) (Bacillus weihenstephanensis).